The primary structure comprises 112 residues: Large ribosomal subunit protein P2A (112 aa).

Residues 83–112 are disordered; it reads GAAPAAEAKKEEKVEEKEESDDDMGFSLFD. Basic and acidic residues predominate over residues 89-98; sequence EAKKEEKVEE.

Belongs to the eukaryotic ribosomal protein P1/P2 family. As to quaternary structure, P1 and P2 exist as dimers at the large ribosomal subunit. In terms of processing, phosphorylated.

Plays an important role in the elongation step of protein synthesis. This is Large ribosomal subunit protein P2A (RPP2A) from Zea mays (Maize).